Reading from the N-terminus, the 451-residue chain is Phosphoglucosamine mutase (451 aa).

Ser107 functions as the Phosphoserine intermediate in the catalytic mechanism. Residues Ser107, Asp246, Asp248, and Asp250 each contribute to the Mg(2+) site. Ser107 is modified (phosphoserine).

The protein belongs to the phosphohexose mutase family. Mg(2+) is required as a cofactor. Post-translationally, activated by phosphorylation.

The enzyme catalyses alpha-D-glucosamine 1-phosphate = D-glucosamine 6-phosphate. Catalyzes the conversion of glucosamine-6-phosphate to glucosamine-1-phosphate. This chain is Phosphoglucosamine mutase, found in Burkholderia lata (strain ATCC 17760 / DSM 23089 / LMG 22485 / NCIMB 9086 / R18194 / 383).